Reading from the N-terminus, the 309-residue chain is Homoserine O-succinyltransferase (309 aa).

C142 functions as the Acyl-thioester intermediate in the catalytic mechanism. Positions 163 and 192 each coordinate substrate. The Proton acceptor role is filled by H235. E237 is an active-site residue. Substrate is bound at residue R249.

This sequence belongs to the MetA family.

The protein localises to the cytoplasm. The enzyme catalyses L-homoserine + succinyl-CoA = O-succinyl-L-homoserine + CoA. It participates in amino-acid biosynthesis; L-methionine biosynthesis via de novo pathway; O-succinyl-L-homoserine from L-homoserine: step 1/1. Functionally, transfers a succinyl group from succinyl-CoA to L-homoserine, forming succinyl-L-homoserine. The sequence is that of Homoserine O-succinyltransferase from Cronobacter sakazakii (strain ATCC BAA-894) (Enterobacter sakazakii).